The sequence spans 96 residues: Protein RnfH (96 aa).

The protein belongs to the UPF0125 (RnfH) family.

This chain is Protein RnfH, found in Escherichia coli O81 (strain ED1a).